The primary structure comprises 244 residues: tRNA pseudouridine synthase A (244 aa).

Asp55 functions as the Nucleophile in the catalytic mechanism. Tyr113 provides a ligand contact to substrate.

The protein belongs to the tRNA pseudouridine synthase TruA family. As to quaternary structure, homodimer.

It catalyses the reaction uridine(38/39/40) in tRNA = pseudouridine(38/39/40) in tRNA. Its function is as follows. Formation of pseudouridine at positions 38, 39 and 40 in the anticodon stem and loop of transfer RNAs. The chain is tRNA pseudouridine synthase A from Phytoplasma mali (strain AT).